A 657-amino-acid chain; its full sequence is Broad substrate specificity ATP-binding cassette transporter ABCG2 (657 aa).

Residues 1–25 (MSSSNDHVLVPMSQRNKNGLPGMSS) form a disordered region. Residues 1-395 (MSSSNDHVLV…KNLLGNPQAS (395 aa)) are Cytoplasmic-facing. The ABC transporter domain occupies 48 to 285 (VKSGFLVRKT…FASAGYHCEP (238 aa)). Residues 79 to 86 (GPTGGGKS), 183 to 189 (RGISGGE), Glu-210, and His-242 each bind ATP. The region spanning 389–653 (LGNPQASVAQ…TIAYLKLLFL (265 aa)) is the ABC transmembrane type-2 domain. The helical transmembrane segment at 396 to 416 (VAQLIVTVILGLIIGALYFGL) threads the bilayer. The Extracellular portion of the chain corresponds to 417–428 (KNDPTGMQNRAG). Residues 429 to 449 (VFFFLTTNQCFTSVSAVELFV) traverse the membrane as a helical segment. Residues 450 to 477 (VEKKLFIHEYISGYYRVSSYFFGKLVSD) are Cytoplasmic-facing. A helical transmembrane segment spans residues 478–498 (LLPMRFLPSVIYTCILYFMLG). Residues 499–506 (LKRTVEAF) lie on the Extracellular side of the membrane. The helical transmembrane segment at 507-527 (FIMMFTLIMVAYTASSMALAI) threads the bilayer. The Cytoplasmic portion of the chain corresponds to 528-535 (AAGQSVVS). Residues 536–556 (VATLLMTISFVFMMLFSGLLV) form a helical membrane-spanning segment. The Extracellular segment spans residues 557-632 (NLRTIGPWLS…LSPWGLWRNH (76 aa)). A disulfide bridge links Cys-592 with Cys-610. 2 N-linked (GlcNAc...) asparagine glycosylation sites follow: Asn-596 and Asn-600. Residues 633–653 (VALACMIIIFLTIAYLKLLFL) form a helical membrane-spanning segment. Residues 654 to 657 (KKYS) are Cytoplasmic-facing.

Belongs to the ABC transporter superfamily. ABCG family. Eye pigment precursor importer (TC 3.A.1.204) subfamily. In terms of assembly, homodimer; disulfide-linked. The minimal functional unit is a homodimer, but the major oligomeric form in plasma membrane is a homotetramer with possibility of higher order oligomerization up to homododecamers. Post-translationally, N-glycosylated in brain capillary, kidney and small intestine but not in heart. In terms of processing, N-glycosylated. Glycosylation-deficient ABCG2 is normally expressed and functional. Phosphorylated. Phosphorylation may regulate the localization to the plasma membrane, the homooligomerization and therefore, the activity of the transporter. In terms of tissue distribution, highly expressed in brain capillary, kidney and small intestine. Lower expression in heart. Preferentially expressed (at protein level) on the luminal membrane of brain capillaries, in kidney and small intestine.

The protein resides in the cell membrane. The protein localises to the apical cell membrane. It localises to the mitochondrion membrane. The catalysed reaction is ATP + H2O + xenobioticSide 1 = ADP + phosphate + xenobioticSide 2.. It carries out the reaction urate(in) + ATP + H2O = urate(out) + ADP + phosphate + H(+). The enzyme catalyses indoxyl sulfate(in) + ATP + H2O = indoxyl sulfate(out) + ADP + phosphate + H(+). It catalyses the reaction sphing-4-enine 1-phosphate(in) + ATP + H2O = sphing-4-enine 1-phosphate(out) + ADP + phosphate + H(+). The catalysed reaction is estrone 3-sulfate(in) + ATP + H2O = estrone 3-sulfate(out) + ADP + phosphate + H(+). It carries out the reaction dehydroepiandrosterone 3-sulfate(in) + ATP + H2O = dehydroepiandrosterone 3-sulfate(out) + ADP + phosphate + H(+). The enzyme catalyses 4-methylumbelliferone sulfate(in) + ATP + H2O = 4-methylumbelliferone sulfate(out) + ADP + phosphate + H(+). It catalyses the reaction 5,7-dimethyl-2-methylamino-4-(3-pyridylmethyl)-1,3-benzothiazol-6-yl beta-D-glucuronate(in) + ATP + H2O = 5,7-dimethyl-2-methylamino-4-(3-pyridylmethyl)-1,3-benzothiazol-6-yl beta-D-glucuronate(out) + ADP + phosphate + H(+). The catalysed reaction is 4-methylumbelliferone beta-D-glucuronate(in) + ATP + H2O = 4-methylumbelliferone beta-D-glucuronate(out) + ADP + phosphate + H(+). It carries out the reaction 5,7-dimethyl-2-methylamino-4-(3-pyridylmethyl)-1,3-benzothiazol-6-yl sulfate(in) + ATP + H2O = 5,7-dimethyl-2-methylamino-4-(3-pyridylmethyl)-1,3-benzothiazol-6-yl sulfate(out) + ADP + phosphate + H(+). The enzyme catalyses 17beta-estradiol 17-O-(beta-D-glucuronate)(in) + ATP + H2O = 17beta-estradiol 17-O-(beta-D-glucuronate)(out) + ADP + phosphate + H(+). It catalyses the reaction methotrexate(in) + ATP + H2O = methotrexate(out) + ADP + phosphate + H(+). The catalysed reaction is riboflavin(in) + ATP + H2O = riboflavin(out) + ADP + phosphate + H(+). It carries out the reaction pheophorbide a(in) + ATP + H2O = pheophorbide a(out) + ADP + phosphate + H(+). The enzyme catalyses itaconate(in) + ATP + H2O = itaconate(out) + ADP + phosphate + H(+). Functionally, broad substrate specificity ATP-dependent transporter of the ATP-binding cassette (ABC) family that actively extrudes a wide variety of physiological compounds, dietary toxins and xenobiotics from cells. Involved in porphyrin homeostasis, mediating the export of protoporphyrin IX (PPIX) from both mitochondria to cytosol and cytosol to extracellular space, it also functions in the cellular export of heme. Also mediates the efflux of sphingosine-1-P from cells. Acts as a urate exporter functioning in both renal and extrarenal urate excretion. In kidney, it also functions as a physiological exporter of the uremic toxin indoxyl sulfate. Also involved in the excretion of steroids like estrone 3-sulfate/E1S, 3beta-sulfooxy-androst-5-en-17-one/DHEAS, and other sulfate conjugates. Mediates the secretion of the riboflavin and biotin vitamins into milk. Extrudes pheophorbide a, a phototoxic porphyrin catabolite of chlorophyll, reducing its bioavailability. Plays an important role in the exclusion of xenobiotics from the brain. It confers to cells a resistance to multiple drugs and other xenobiotics including mitoxantrone, pheophorbide, camptothecin, methotrexate, azidothymidine, and the anthracyclines daunorubicin and doxorubicin, through the control of their efflux. In placenta, it limits the penetration of drugs from the maternal plasma into the fetus. May play a role in early stem cell self-renewal by blocking differentiation. In inflammatory macrophages, exports itaconate from the cytosol to the extracellular compartment and limits the activation of TFEB-dependent lysosome biogenesis involved in antibacterial innate immune response. The sequence is that of Broad substrate specificity ATP-binding cassette transporter ABCG2 (Abcg2) from Rattus norvegicus (Rat).